We begin with the raw amino-acid sequence, 474 residues long: Semenogelin-2 (474 aa).

A signal peptide spans 1–23; that stretch reads MKSIILFVLSLLLILEKQAAVMG. Disordered regions lie at residues 24-62, 132-158, 173-194, 226-247, and 272-474; these read QKGG…SKGS, GGQA…LSSQ, KEQA…QSSY, VREE…DRLQ, and NLNQ…SSTE. 3 stretches are compositionally biased toward polar residues: residues 31–40, 137–158, and 174–194; these read QLPSGSSQFP, RGTQ…LSSQ, and EQAS…QSSY. Residues 292–310 are compositionally biased toward basic and acidic residues; it reads RTEERQLNHGEKSVQKDVS. The span at 325-334 shows a compositional bias: polar residues; sequence KSQNQVTIHS. Positions 335–346 are enriched in basic and acidic residues; it reads QDQEHGHKENKM. Polar residues predominate over residues 372 to 397; the sequence is GSISIQTEEQIHGKSQNQVRIPSQAQ. Over residues 399-426 the composition is skewed to basic and acidic residues; the sequence is YGHKENKISYRSSSTEERRLNSGEKDVQ. Residues 445 to 455 show a composition bias toward polar residues; that stretch reads KSQNQVTIPSQ. The span at 456 to 465 shows a compositional bias: basic and acidic residues; sequence DQEHGHKENK.

Belongs to the semenogelin family. As to quaternary structure, interacts with SERPINA5.

It localises to the secreted. Functionally, participates in the formation of a gel matrix (sperm coagulum) entrapping the accessory gland secretions and ejaculated spermatozoa. The protein is Semenogelin-2 (SEMG2) of Gorilla gorilla gorilla (Western lowland gorilla).